A 43-amino-acid chain; its full sequence is Potassium channel toxin gamma-KTx 4.8 (43 aa).

Cystine bridges form between Cys5–Cys23, Cys11–Cys34, Cys20–Cys39, and Cys24–Cys41.

This sequence belongs to the ergtoxin family. Gamma-KTx 4 subfamily. Expressed by the venom gland.

Its subcellular location is the secreted. In terms of biological role, reversibly blocks Kv11/ERG potassium channels. This chain is Potassium channel toxin gamma-KTx 4.8, found in Centruroides elegans (Bark scorpion).